A 252-amino-acid chain; its full sequence is Trans-aconitate 2-methyltransferase (252 aa).

The protein belongs to the methyltransferase superfamily. Tam family.

The protein localises to the cytoplasm. The enzyme catalyses trans-aconitate + S-adenosyl-L-methionine = (E)-3-(methoxycarbonyl)pent-2-enedioate + S-adenosyl-L-homocysteine. Functionally, catalyzes the S-adenosylmethionine monomethyl esterification of trans-aconitate. This chain is Trans-aconitate 2-methyltransferase, found in Escherichia coli (strain 55989 / EAEC).